Here is a 246-residue protein sequence, read N- to C-terminus: Neurotrophic factor BDNF precursor form (246 aa).

Residues 1-18 form the signal peptide; that stretch reads MTILFLTMVISYLSCMKA. A propeptide spanning residues 19 to 127 is cleaved from the precursor; that stretch reads TPMKEVSIRG…AANMSMRVRR (109 aa). A glycan (N-linked (GlcNAc...) asparagine) is linked at asparagine 120. Cystine bridges form between cysteine 140-cysteine 207, cysteine 185-cysteine 236, and cysteine 195-cysteine 238.

It belongs to the NGF-beta family.

The protein localises to the secreted. Its function is as follows. Promotes the survival of neuronal populations that are all located either in the central nervous system or directly connected to it. The protein is Neurotrophic factor BDNF precursor form (BDNF) of Ptyas major (Chinese green snake).